A 529-amino-acid chain; its full sequence is Mitochondrial inner membrane magnesium transporter MIT1 (529 aa).

Coiled coils occupy residues 336-388 and 416-450; these read KIQL…LKNE and LLET…LNLD. Residues 456–476 form a helical membrane-spanning segment; the sequence is FILLNAKISFSTLFCSICAVI. The Mitochondrial intermembrane portion of the chain corresponds to 477-492; that stretch reads TSLFGMNLKNFIEHND. Residues 493 to 513 form a helical membrane-spanning segment; the sequence is YAFFIVSIFITSWSIVGIYFT. At 514–529 the chain is on the mitochondrial matrix side; sequence KNINTLLRFFDKYNVK.

It belongs to the CorA metal ion transporter (MIT) (TC 1.A.35) family.

The protein resides in the mitochondrion inner membrane. Its function is as follows. Mitochondrial inner membrane magnesium transporter required for mitochondrial magnesium homeostasis. Involved in the development of the sporozoite in the mosquito vector midgut. In Plasmodium falciparum (isolate 3D7), this protein is Mitochondrial inner membrane magnesium transporter MIT1.